We begin with the raw amino-acid sequence, 245 residues long: Octanoyltransferase (245 aa).

The region spanning Lys54–Ile242 is the BPL/LPL catalytic domain. Residues Arg93–His100, Ala173–Gly175, and Gly186–Ser188 contribute to the substrate site. Cys204 acts as the Acyl-thioester intermediate in catalysis.

The protein belongs to the LipB family.

Its subcellular location is the cytoplasm. It carries out the reaction octanoyl-[ACP] + L-lysyl-[protein] = N(6)-octanoyl-L-lysyl-[protein] + holo-[ACP] + H(+). The protein operates within protein modification; protein lipoylation via endogenous pathway; protein N(6)-(lipoyl)lysine from octanoyl-[acyl-carrier-protein]: step 1/2. Catalyzes the transfer of endogenously produced octanoic acid from octanoyl-acyl-carrier-protein onto the lipoyl domains of lipoate-dependent enzymes. Lipoyl-ACP can also act as a substrate although octanoyl-ACP is likely to be the physiological substrate. This is Octanoyltransferase from Bartonella tribocorum (strain CIP 105476 / IBS 506).